Consider the following 181-residue polypeptide: MSRIGRMPIKIPPDVKITIEGNTVRVEGPKGRLEREIPANTKLVVENGRAVIEKAGEEKPGTAMLGLTRTLVANMVDGVTKGFQRNLELTGVGYRASLQGRKLVMTLGYSHPVEYEPPADIEIEVPAVTRIIIRGADKEKVGRVAAKIRSFRSPEPYKGKGVRYEGEKIRLKAGKAGLKKR.

This sequence belongs to the universal ribosomal protein uL6 family. Part of the 50S ribosomal subunit.

In terms of biological role, this protein binds to the 23S rRNA, and is important in its secondary structure. It is located near the subunit interface in the base of the L7/L12 stalk, and near the tRNA binding site of the peptidyltransferase center. The sequence is that of Large ribosomal subunit protein uL6 from Desulforudis audaxviator (strain MP104C).